The sequence spans 240 residues: Transcriptional regulatory protein ResD (240 aa).

A Response regulatory domain is found at 8 to 121; that stretch reads KILVVDDEAR…EVVLRVKALL (114 aa). Asp57 carries the post-translational modification 4-aspartylphosphate. The ompR/PhoB-type DNA-binding region spans 137 to 237; the sequence is KNVLVFSHLS…VWGVGYKFEV (101 aa).

Interacts with the RNA polymerase core. Phosphorylated by ResE.

It is found in the cytoplasm. Member of the two-component regulatory system ResD/ResE. Required for the expression of resA, ctaA, qcrABC and fnr; activation role in global regulation of aerobic and anaerobic respiration. This is Transcriptional regulatory protein ResD (resD) from Bacillus subtilis (strain 168).